The sequence spans 249 residues: MDVLSKSSLKELLAHLERTPLEEAISYKIGTIPYQNVLISRNEYYNQPYPDVTSLIDGVAREGQRNVNGLIMSIISYVVSGSGHYIPNIGYTLLRRSILDILTKHDTGLNTNNINYDMIARNLTVSKMNCEQRKRMLICFKLLAYKDGNLNDYETYLNQNISLKQIAPNFIPGDMRTVMSNSDKLSIVGIPAYRLTQSTELSIRDDNAKSYKIGYVDWYNSSSFLREGNDFNLISLKDRDNKYVRLNGW.

The protein localises to the virion. In terms of biological role, forms the virion spike 'foot' and helps anchor the VP9 spike 'head' protein in the virion. This is Structural protein VP10 (Segment-10) from Banna virus (BAV).